A 339-amino-acid polypeptide reads, in one-letter code: SVP1-like protein 2 (339 aa).

WD repeat units follow at residues 177 to 217 and 222 to 261; these read AHAN…LVRE and LDRT…ENKR.

The protein belongs to the WD repeat PROPPIN family.

It is found in the vacuole membrane. The protein resides in the cytoplasmic vesicle membrane. Functionally, involved in mitochondrial or peroxisomal functions and amino acid signaling pathways. This is SVP1-like protein 2 (HSV2) from Kluyveromyces lactis (strain ATCC 8585 / CBS 2359 / DSM 70799 / NBRC 1267 / NRRL Y-1140 / WM37) (Yeast).